Reading from the N-terminus, the 159-residue chain is Large ribosomal subunit protein uL10 (159 aa).

This sequence belongs to the universal ribosomal protein uL10 family. As to quaternary structure, part of the ribosomal stalk of the 50S ribosomal subunit. The N-terminus interacts with L11 and the large rRNA to form the base of the stalk. The C-terminus forms an elongated spine to which L12 dimers bind in a sequential fashion forming a multimeric L10(L12)X complex.

In terms of biological role, forms part of the ribosomal stalk, playing a central role in the interaction of the ribosome with GTP-bound translation factors. The chain is Large ribosomal subunit protein uL10 from Nautilia profundicola (strain ATCC BAA-1463 / DSM 18972 / AmH).